The following is a 300-amino-acid chain: Peptidyl-prolyl cis-trans isomerase E (300 aa).

Positions 6-84 (RTIYVGGLAD…RTIRVNLAKP (79 aa)) constitute an RRM domain. Residues 142–298 (FFDIRIGGND…QKIVIYSCGE (157 aa)) form the PPIase cyclophilin-type domain.

This sequence belongs to the cyclophilin-type PPIase family. PPIase E subfamily.

Its subcellular location is the nucleus. The enzyme catalyses [protein]-peptidylproline (omega=180) = [protein]-peptidylproline (omega=0). Functionally, PPIases accelerate the folding of proteins. It catalyzes the cis-trans isomerization of proline imidic peptide bonds in oligopeptides. Combines RNA-binding and PPIase activities. The chain is Peptidyl-prolyl cis-trans isomerase E (cyp33) from Drosophila melanogaster (Fruit fly).